A 129-amino-acid polypeptide reads, in one-letter code: Phosphoribosyl-AMP cyclohydrolase (129 aa).

Mg(2+) is bound at residue Asp84. Residue Cys85 participates in Zn(2+) binding. Mg(2+)-binding residues include Asp86 and Asp88. Positions 101 and 108 each coordinate Zn(2+).

The protein belongs to the PRA-CH family. In terms of assembly, homodimer. Mg(2+) is required as a cofactor. The cofactor is Zn(2+).

The protein localises to the cytoplasm. It carries out the reaction 1-(5-phospho-beta-D-ribosyl)-5'-AMP + H2O = 1-(5-phospho-beta-D-ribosyl)-5-[(5-phospho-beta-D-ribosylamino)methylideneamino]imidazole-4-carboxamide. The protein operates within amino-acid biosynthesis; L-histidine biosynthesis; L-histidine from 5-phospho-alpha-D-ribose 1-diphosphate: step 3/9. Its function is as follows. Catalyzes the hydrolysis of the adenine ring of phosphoribosyl-AMP. The polypeptide is Phosphoribosyl-AMP cyclohydrolase (Halobacterium salinarum (strain ATCC 700922 / JCM 11081 / NRC-1) (Halobacterium halobium)).